The following is a 362-amino-acid chain: E3 ubiquitin-protein ligase TM129 (362 aa).

The Lumenal portion of the chain corresponds to 1–6; the sequence is MDSPEV. The helical transmembrane segment at 7 to 27 threads the bilayer; that stretch reads TFTLAYLVFAVCFVFTPNEFH. Topologically, residues 28–56 are cytoplasmic; that stretch reads AAGLTVQNLLSGWLGSEDAAFVPFHLRRT. Residues 57 to 77 traverse the membrane as a helical segment; the sequence is AATLLCHSLLPLGYYVGMCLA. Topologically, residues 78–94 are lumenal; that stretch reads ASEKRLHALSQAPEAWR. The helical transmembrane segment at 95-115 threads the bilayer; that stretch reads LFLLLAVTLPSIACILIYYWS. Residues 116 to 362 are Cytoplasmic-facing; it reads RDRWACHPLA…FCILDVCTVR (247 aa). The RING-type; degenerate zinc finger occupies 285–350; sequence CIGCMQTRAS…ASRVPCPTCR (66 aa).

The protein belongs to the TMEM129 family. As to quaternary structure, integral component of ER-resident dislocation complexes.

The protein localises to the endoplasmic reticulum membrane. The enzyme catalyses S-ubiquitinyl-[E2 ubiquitin-conjugating enzyme]-L-cysteine + [acceptor protein]-L-lysine = [E2 ubiquitin-conjugating enzyme]-L-cysteine + N(6)-ubiquitinyl-[acceptor protein]-L-lysine.. Its pathway is protein modification; protein ubiquitination. Functionally, E3 ubiquitin-protein ligase involved in ER-associated protein degradation, preferentially associates with the E2 enzyme UBE2J2. Exploited by viral US11 proteins to mediate HLA class I proteins degradation. The polypeptide is E3 ubiquitin-protein ligase TM129 (TMEM129) (Homo sapiens (Human)).